We begin with the raw amino-acid sequence, 139 residues long: MSPTLRLTISTPASLLVNAQAIVALRAEDGSGSFGILPGHADFLTVLTPCVLRWRGTENIRRFCAVEEGVLRVSEGHSVTIACRSGMLGDSLAALEAQIETARARTLDTARNARVEQTRLHAQAVRQLLRYLRPSRGDA.

Belongs to the ATPase epsilon chain family. F-type ATPases have 2 components, CF(1) - the catalytic core - and CF(0) - the membrane proton channel. CF(1) has five subunits: alpha(3), beta(3), gamma(1), delta(1), epsilon(1). CF(0) has three main subunits: a, b and c.

The protein localises to the cell inner membrane. Its function is as follows. Produces ATP from ADP in the presence of a proton gradient across the membrane. The sequence is that of ATP synthase epsilon chain 2 from Paraburkholderia xenovorans (strain LB400).